A 237-amino-acid polypeptide reads, in one-letter code: Beta-glucanase (237 aa).

Positions 1-23 are cleaved as a signal peptide; that stretch reads MKKKSCFTLVTTFAFSLIFSVSA. In terms of domain architecture, GH16 spans 28-237; that stretch reads VFWEPLSYFN…EYDWVKYTSN (210 aa). A disulfide bond links C55 and C84. E128 serves as the catalytic Nucleophile. E132 (proton donor) is an active-site residue.

This sequence belongs to the glycosyl hydrolase 16 family.

The enzyme catalyses Hydrolysis of (1-&gt;4)-beta-D-glucosidic linkages in beta-D-glucans containing (1-&gt;3)- and (1-&gt;4)-bonds.. This is Beta-glucanase from Paenibacillus macerans (Bacillus macerans).